Here is a 686-residue protein sequence, read N- to C-terminus: Elongation factor G 2 (686 aa).

The tr-type G domain maps to threonine 7 to leucine 280. GTP contacts are provided by residues alanine 16–threonine 23, aspartate 80–histidine 84, and asparagine 134–aspartate 137.

Belongs to the TRAFAC class translation factor GTPase superfamily. Classic translation factor GTPase family. EF-G/EF-2 subfamily.

The protein resides in the cytoplasm. Catalyzes the GTP-dependent ribosomal translocation step during translation elongation. During this step, the ribosome changes from the pre-translocational (PRE) to the post-translocational (POST) state as the newly formed A-site-bound peptidyl-tRNA and P-site-bound deacylated tRNA move to the P and E sites, respectively. Catalyzes the coordinated movement of the two tRNA molecules, the mRNA and conformational changes in the ribosome. In Streptomyces coelicolor (strain ATCC BAA-471 / A3(2) / M145), this protein is Elongation factor G 2 (fusB).